The primary structure comprises 878 residues: Alanine--tRNA ligase (878 aa).

Zn(2+)-binding residues include His-564, His-568, Cys-666, and His-670.

It belongs to the class-II aminoacyl-tRNA synthetase family. As to quaternary structure, homotetramer. It depends on Zn(2+) as a cofactor.

It localises to the cytoplasm. The enzyme catalyses tRNA(Ala) + L-alanine + ATP = L-alanyl-tRNA(Ala) + AMP + diphosphate. In terms of biological role, catalyzes the attachment of alanine to tRNA(Ala) in a two-step reaction: alanine is first activated by ATP to form Ala-AMP and then transferred to the acceptor end of tRNA(Ala). Also edits incorrectly charged Ser-tRNA(Ala) and Gly-tRNA(Ala) via its editing domain. In Buchnera aphidicola subsp. Acyrthosiphon pisum (strain APS) (Acyrthosiphon pisum symbiotic bacterium), this protein is Alanine--tRNA ligase.